The following is a 197-amino-acid chain: Probable proteasome subunit beta type-4 (197 aa).

Belongs to the peptidase T1B family. As to quaternary structure, the 26S proteasome consists of a 20S proteasome core and two 19S regulatory subunits. The 20S proteasome core is composed of 28 subunits that are arranged in four stacked rings, resulting in a barrel-shaped structure. The two end rings are each formed by seven alpha subunits, and the two central rings are each formed by seven beta subunits. The catalytic chamber with the active sites is on the inside of the barrel.

It localises to the cytoplasm. The protein localises to the nucleus. Its function is as follows. Non-catalytic component of the proteasome which degrades poly-ubiquitinated proteins in the cytoplasm and in the nucleus. It is essential for the regulated turnover of proteins and for the removal of misfolded proteins. The proteasome is a multicatalytic proteinase complex that is characterized by its ability to cleave peptides with Arg, Phe, Tyr, Leu, and Glu adjacent to the leaving group at neutral or slightly basic pH. It has an ATP-dependent proteolytic activity. The chain is Probable proteasome subunit beta type-4 (PRE1) from Encephalitozoon cuniculi (strain GB-M1) (Microsporidian parasite).